The primary structure comprises 386 residues: Microtubule-binding protein TANGLED1 (386 aa).

Disordered regions lie at residues 83–105, 140–202, 244–266, 303–330, and 345–386; these read RMRG…GVGG, AAGA…RVRS, HAST…QKRL, PARP…CSFS, and RLSL…ISSR. Residues 170 to 180 are compositionally biased toward basic residues; it reads RARRAREKQSH. A compositionally biased stretch (low complexity) spans 181–193; that stretch reads RGGAATRGADAAT. The span at 375–386 shows a compositional bias: polar residues; it reads TVRTVSSKISSR.

As to expression, expressed in vegetative shoot tips consisting of leaf primordia and the bases of immature leaves, the shoot apical meristem, and unexpanded stem tissue. Strongly expressed in tissues enriched in dividing cells: ear primordia and embryos.

The protein resides in the cytoplasm. The protein localises to the cytoskeleton. It is found in the spindle. It localises to the phragmoplast. In terms of biological role, is required for spatial control cell division during leaf development. Through an association with microtubules, acts both for the positioning of cytoskeletal arrays that establish planes of cell division during prophase and for spatial guidance of expanding phragmoplasts toward preestablished cortical division sites (CDS) during cytokinesis. This chain is Microtubule-binding protein TANGLED1 (TAN1), found in Zea mays (Maize).